The following is a 223-amino-acid chain: Serum amyloid P-component (223 aa).

Residues 1–19 (MNKPLLWISVLTSLLEAFA) form the signal peptide. The Pentraxin (PTX) domain occupies 24 to 223 (SGKVFVFPRE…YVIIKPLVWV (200 aa)). The N-linked (GlcNAc...) asparagine glycan is linked to asparagine 51. Cysteines 55 and 114 form a disulfide. The Ca(2+) site is built by aspartate 77, asparagine 78, glutamate 155, glutamine 156, aspartate 157, and glutamine 167.

This sequence belongs to the pentraxin family. Homopentamer. Pentraxin (or pentaxin) have a discoid arrangement of 5 non-covalently bound subunits. It depends on Ca(2+) as a cofactor. Post-translationally, N-glycosylated with a complex biantennary oligosaccharide chain with a sialic acid at the end (disialo-SAP). Monosialo-SAP as well as asioalo-SAP are also detected. In terms of tissue distribution, found in serum and urine.

The protein localises to the secreted. In terms of biological role, can interact with DNA and histones and may scavenge nuclear material released from damaged circulating cells. May also function as a calcium-dependent lectin. The chain is Serum amyloid P-component (APCS) from Homo sapiens (Human).